A 505-amino-acid chain; its full sequence is Betaine aldehyde dehydrogenase 1 (505 aa).

Trp-163–Trp-172 contacts betaine aldehyde. An NAD(+)-binding site is contributed by Gly-240–Gly-245. Betaine aldehyde-binding positions include Glu-262, Gln-294–Ser-297, and Cys-455. Catalysis depends on residues Glu-262 and Cys-296. 4-aminobutanal contacts are provided by residues Glu-262–Leu-263 and Cys-296. Trp-461 serves as a coordination point for 4-aminobutanal. The Microbody targeting signal signature appears at Ser-503–Leu-505.

The protein belongs to the aldehyde dehydrogenase family. In terms of assembly, homodimer.

The protein resides in the peroxisome. It catalyses the reaction betaine aldehyde + NAD(+) + H2O = glycine betaine + NADH + 2 H(+). It participates in amine and polyamine biosynthesis; betaine biosynthesis via choline pathway; betaine from betaine aldehyde: step 1/1. Its function is as follows. Dehydrogenase that can use N-acetyl-gamma-aminobutyraldehyde (NAGABald), gamma-guanidinobutyraldehyde (GGBald), betaine aldehyde (Bet-ald), gamma-aminobutyraldehyde (GAB-ald), acetaldehyde, 4-aminobutylaldehyde (AB-ald), 3-aminopropionaldehyde (AP-ald), 4-N-trimethylaminobutyraldehyde (TMAB-ald) and 3-N-trimethylaminopropionaldehyde (TMAP-ald) as substrates. Catalyzes the oxidation of GAB-ald more efficiently than Bet-ald. May convert acetaldehyde into acetate, thus facilitating the production of acetyl-CoA in peroxisomes under anaerobic conditions. This chain is Betaine aldehyde dehydrogenase 1 (BADH1), found in Oryza sativa subsp. japonica (Rice).